Here is a 1733-residue protein sequence, read N- to C-terminus: Serine-aspartate repeat-containing protein F (1733 aa).

Residues 1 to 45 form the signal peptide; the sequence is MKKRRQGPINKRVDFLSNKVNKYSIRKFTVGTASILVGATLMFGA. Positions 46 to 678 are ligand binding A region; that stretch reads ADNEAKAAED…GSSTAQGDNP (633 aa). Disordered stretches follow at residues 51–269 and 332–351; these read KAAE…SVND and PLAL…ASPR. A compositionally biased stretch (basic and acidic residues) spans 61-74; the sequence is ASKEEQKGSRDNEN. Composition is skewed to polar residues over residues 85–99 and 146–168; these read GSHS…NNAT and PKTS…DNLN. A compositionally biased stretch (basic and acidic residues) spans 175-184; sequence KESKTDEHST. Residues 186–226 are compositionally biased toward polar residues; it reads QAQMSTNKSNLDTNDSPTQSEKTSSQANNDSTDNQSAPSKQ. A compositionally biased stretch (basic and acidic residues) spans 227–253; sequence LDSKPSEQKVYKTKFNDEPTQDVEHTT. Polar residues-rich tracts occupy residues 255–266 and 336–346; these read KLKTPSVSTDSS and NRSQSKNSPHK. 4 consecutive CNA-B domains span residues 679-797, 798-907, 908-1018, and 1019-1129; these read TYSL…YLTP, KYNV…FYKP, TYNL…YKTP, and KYSV…FDDD. The tract at residues 679–1129 is type I collagen binding region; the sequence is TYSLGDYVWL…SIDNGYFDDD (451 aa). The interval 862-890 is disordered; the sequence is FETPEGYTPTKQNSGSDEGKDSNGTKTTV. Residues 1085-1708 are disordered; that stretch reads KPEGMTQTTA…ANEDHDSKGT (624 aa). Residues 1107 to 1119 show a composition bias toward basic and acidic residues; it reads EDVRVTITDHDDF. Residues 1125 to 1684 are compositionally biased toward acidic residues; it reads YFDDDSDSDS…DSDSDSDSDS (560 aa). The span at 1685-1706 shows a compositional bias: basic and acidic residues; sequence DSDKNAKDKLPDTGANEDHDSK. Positions 1694–1698 match the LPXTG sorting signal motif; the sequence is LPDTG. Pentaglycyl murein peptidoglycan amidated threonine is present on threonine 1697. The propeptide at 1698 to 1733 is removed by sortase; the sequence is GANEDHDSKGTLLGTLFAGLGALLLGRRRKKDNKEK.

This sequence belongs to the serine-aspartate repeat-containing protein (SDr) family.

It is found in the secreted. Its subcellular location is the cell wall. Functionally, binds to type I collagen via alpha-2(I) or alpha-1(I) chains, although its affinity for the alpha-1(I) chain is significantly higher. Involved in bacterial adherence to transcutaneous drivelines from explanted ventricular assist devices. The sequence is that of Serine-aspartate repeat-containing protein F (sdrF) from Staphylococcus epidermidis.